An 887-amino-acid chain; its full sequence is Serine/threonine-protein kinase greatwall (887 aa).

The Protein kinase domain occupies 32 to 843 (FGIVKPISRG…LKDLKAHPLF (812 aa)). ATP-binding positions include 38–46 (ISRGAFGKV) and Lys-61. Catalysis depends on Asp-155, which acts as the Proton acceptor. Phosphothreonine; by CDK1; in vitro is present on residues Thr-221 and Thr-244. Positions 321 to 353 (DAEAPPYFNSSRVKDSSSEQARSKKPTGSSASQ) are disordered. Ser-363 is subject to Phosphoserine; by CDK1; in vitro. Positions 410–435 (PKDFDKTGQGELGKFTSSPDSPPWLA) are disordered. Phosphoserine; by CDK1; in vitro is present on Ser-465. The disordered stretch occupies residues 556-624 (RDGEVSSTSE…EITPDNKGIP (69 aa)). Over residues 575-587 (QDSSSTGMSVTEN) the composition is skewed to polar residues. Positions 588-604 (QIDRDLSHVDKSIKELS) are enriched in basic and acidic residues. Positions 608–617 (SQSENSEEIT) are enriched in acidic residues. Ser-654 and Ser-677 each carry phosphoserine; by CDK1; in vitro. Position 748 is a phosphothreonine; by CDK1 (Thr-748). In terms of domain architecture, AGC-kinase C-terminal spans 844–887 (HGMEWEELQYQPMSFIPQPDDETDTTYFEARNNAQHLKVSGFSL).

Belongs to the protein kinase superfamily. AGC Ser/Thr protein kinase family. Interacts with arpp19 and ensa, leading to their phosphorylation. In terms of processing, phosphorylation at Thr-748 by CDK1 during M phase activates its kinase activity. Not active during other phases of the cell cycle. Has the ability to autophosphorylate.

The protein localises to the cytoplasm. The protein resides in the cytoskeleton. It localises to the microtubule organizing center. It is found in the centrosome. Its subcellular location is the nucleus. It catalyses the reaction L-seryl-[protein] + ATP = O-phospho-L-seryl-[protein] + ADP + H(+). It carries out the reaction L-threonyl-[protein] + ATP = O-phospho-L-threonyl-[protein] + ADP + H(+). Functionally, serine/threonine kinase that plays a key role in M phase by acting as a regulator of mitosis entry and maintenance. Acts by promoting the inactivation of protein phosphatase 2A (PP2A) during M phase: does not directly inhibit PP2A but acts by mediating phosphorylation and subsequent activation of arpp19 and ensa at 'Ser-67', 2 phosphatase inhibitors that specifically inhibit the ppp2r2d (PR55-delta) subunit of PP2A. Inactivation of PP2A during M phase is essential to keep cyclin-B1-CDK1 activity high. Following DNA damage, it is also involved in checkpoint recovery by being inhibited. This Xenopus laevis (African clawed frog) protein is Serine/threonine-protein kinase greatwall (mastl).